A 424-amino-acid chain; its full sequence is Protein maelstrom 1 (424 aa).

Positions 2–69 (PPKKHSGFMM…LTRVKKERLN (68 aa)) form a DNA-binding region, HMG box.

It belongs to the maelstrom family.

The protein localises to the cytoplasm. It is found in the nucleus. Involved both in the piRNA and miRNA metabolic processes. As a component of the meiotic nuage, plays a central role during oogenesis by repressing transposable elements and preventing their mobilization, which is essential for the germline integrity. Repression of transposable elements is mediated via the piRNA metabolic process, which mediates the repression of transposable elements during meiosis by forming complexes composed of piRNAs and Piwi proteins and governs the repression of transposons. As a nuclear component, it is required for proper differentiation in the germline stem cell (GSC) lineage by repressing microRNA-7 (miR-7), thereby acting as an indirect regulator of bag-of-marbles (Bam). Acts by binding to the promoter of miR-7 gene and repressing its expression; miR-7 repression alleviates the Bam repression by miR-7, thereby allowing differentiation in the germline stem cell (GSC) lineage. This Drosophila ananassae (Fruit fly) protein is Protein maelstrom 1 (mael1).